Consider the following 267-residue polypeptide: Neural/ectodermal development factor IMP-L2 (267 aa).

The first 25 residues, 1–25 (MEAKMNLHVCALALLLFGSIATVRG), serve as a signal peptide directing secretion. Ig-like C2-type domains follow at residues 48–149 (PRNR…KTIY) and 174–260 (PRII…TFVY). Cystine bridges form between C80–C139 and C195–C244.

Detected in several sites including the ventral neuroectoderm, the tracheal pits, the pharynx and esophagus, and specific neuronal cell bodies, where it is primarily expressed.

The protein localises to the secreted. Its subcellular location is the extracellular space. Functionally, essential developmental role during embryogenesis, in particular the normal development of the nervous system. May be involved in some aspect of cell adhesion. The chain is Neural/ectodermal development factor IMP-L2 (ImpL2) from Drosophila melanogaster (Fruit fly).